Here is a 548-residue protein sequence, read N- to C-terminus: Natural resistance-associated macrophage protein 1 (548 aa).

Positions 1–12 are enriched in polar residues; sequence MSGDTGTPNQGG. Residues 1–38 form a disordered region; the sequence is MSGDTGTPNQGGTRYGSISSPPSPGPQQAPPGGTYLSE. Over 1–55 the chain is Cytoplasmic; sequence MSGDTGTPNQGGTRYGSISSPPSPGPQQAPPGGTYLSEKIPIPDTESGAFSLRKL. Residues 56-73 form a helical membrane-spanning segment; that stretch reads WAFTGPGFLMSIAFLDPG. At 74 to 82 the chain is on the extracellular side; it reads NIESDLQAG. The chain crosses the membrane as a helical span at residues 83 to 102; that stretch reads AVAGFKLLWVLLWATVLGLL. The Cytoplasmic segment spans residues 103–139; it reads CQRLAARLGVVTGKDLGEVCHLYYPKVPRTLLWLTIE. The chain crosses the membrane as a helical span at residues 140–160; the sequence is LAIVGSDMQEVIGTAIAFSLL. Residues 161–164 lie on the Extracellular side of the membrane; it reads SAGR. The chain crosses the membrane as a helical span at residues 165–184; the sequence is IPLWGGVLITIVDTFFFLFL. Topologically, residues 185–193 are cytoplasmic; it reads DNYGLRKLE. The chain crosses the membrane as a helical span at residues 194-214; that stretch reads AFFGFLITIMALTFGYEYVVA. The Extracellular portion of the chain corresponds to 215 to 237; it reads RPAQGALLQGLFLPSCPGCGQPE. Residues 238 to 256 traverse the membrane as a helical segment; it reads LLQAVGIVGAIIMPHNIYL. The Cytoplasmic segment spans residues 257 to 284; it reads HSSLVKSREVDRSRRADIREANMYFLIE. Residues 285-304 traverse the membrane as a helical segment; the sequence is ATIALSVSFFINLFVMAVFG. Residues 305–346 are Extracellular-facing; the sequence is QAFYKQTNQAAFNICANSSLHDYATIFPRDNLTVAVDIYQGG. N-linked (GlcNAc...) asparagine glycans are attached at residues Asn-321 and Asn-335. Residues 347–366 form a helical membrane-spanning segment; that stretch reads VILGCLFGPAALYIWAVGLL. The Cytoplasmic segment spans residues 367–397; it reads AAGQSSTMTGTYAGQFVMEGFLKLRWSRFAR. The chain crosses the membrane as a helical span at residues 398 to 415; the sequence is VLLTRSCAIPPTVLLAVF. Residues 416–426 are Extracellular-facing; sequence RDLQDLSGLND. A helical transmembrane segment spans residues 427–447; it reads LLNVLQSLLLPFAVLPILTFT. The Cytoplasmic portion of the chain corresponds to 448 to 463; it reads SMPALMQEFANGLVSK. The chain crosses the membrane as a helical span at residues 464–485; sequence IITSSIMVLVCAVNLYFVISYV. Residues 486–493 are Extracellular-facing; the sequence is PSLPHPAY. The helical transmembrane segment at 494–513 threads the bilayer; sequence FSLVALLAAAYLGLTTYLVW. At 514-548 the chain is on the cytoplasmic side; sequence TCLITQGATRLAHSSHQRFLYGLPGEDQEEGRTSG.

The protein belongs to the NRAMP family.

Its subcellular location is the late endosome membrane. It localises to the lysosome membrane. It catalyses the reaction Zn(2+)(in) + H(+)(out) = Zn(2+)(out) + H(+)(in). The enzyme catalyses Fe(2+)(in) + H(+)(out) = Fe(2+)(out) + H(+)(in). The catalysed reaction is Mn(2+)(in) + H(+)(out) = Mn(2+)(out) + H(+)(in). Functionally, macrophage-specific antiporter that fluxes metal ions in either direction against a proton gradient. Localized to late endosomal lysosomal membranes, delivers bivalent cations from the cytosol into these acidic compartments where they may directly affect antimicrobial activity. Involved in iron metabolism and host natural resistance to infection with intracellular parasites. Pathogen resistance involves sequestration of Fe(2+) and Mn(2+), cofactors of both prokaryotic and eukaryotic catalases and superoxide dismutases, not only to protect the macrophage against its own generation of reactive oxygen species, but to deny the cations to the pathogen for synthesis of its protective enzymes. The sequence is that of Natural resistance-associated macrophage protein 1 (SLC11A1) from Ovis aries (Sheep).